Consider the following 121-residue polypeptide: Large ribosomal subunit protein bL12 (121 aa).

It belongs to the bacterial ribosomal protein bL12 family. As to quaternary structure, homodimer. Part of the ribosomal stalk of the 50S ribosomal subunit. Forms a multimeric L10(L12)X complex, where L10 forms an elongated spine to which 2 to 4 L12 dimers bind in a sequential fashion. Binds GTP-bound translation factors.

Functionally, forms part of the ribosomal stalk which helps the ribosome interact with GTP-bound translation factors. Is thus essential for accurate translation. The chain is Large ribosomal subunit protein bL12 from Streptococcus pyogenes serotype M3 (strain ATCC BAA-595 / MGAS315).